Here is a 401-residue protein sequence, read N- to C-terminus: Homocitrate synthase (401 aa).

Residues 22-271 (VRFCDTTLRD…KLPIDLDTTS (250 aa)) form the Pyruvate carboxyltransferase domain. The tract at residues 367–401 (TRHKRGLDSRDLPGTSRAGRDAGPRAGTPTREEPV) is disordered.

This sequence belongs to the alpha-IPM synthase/homocitrate synthase family.

It carries out the reaction acetyl-CoA + 2-oxoglutarate + H2O = (2R)-homocitrate + CoA + H(+). Functionally, this protein is a Fe-Mo-cofactor biosynthetic component. The chain is Homocitrate synthase (nifV) from Frankia sp. (strain FaC1).